The chain runs to 108 residues: MIKGQLAGLMKQAQAMQDNLKKAQDELANVEVEGQSGAGLVKVVMTCKHDVKRLSIDPSLLADDKDMLEDLVAAAFNDAVRRAEAVSQEKMGKLTAGMPLPPGMKFPF.

The protein belongs to the YbaB/EbfC family. Homodimer.

The protein localises to the cytoplasm. The protein resides in the nucleoid. In terms of biological role, binds to DNA and alters its conformation. May be involved in regulation of gene expression, nucleoid organization and DNA protection. In Leptothrix cholodnii (strain ATCC 51168 / LMG 8142 / SP-6) (Leptothrix discophora (strain SP-6)), this protein is Nucleoid-associated protein Lcho_1975.